Reading from the N-terminus, the 308-residue chain is Uricase (308 aa).

Catalysis depends on charge relay system residues Lys-5 and Thr-65. Positions 65, 66, 177, 194, 242, 243, and 269 each coordinate urate. The disordered stretch occupies residues 283–308; it reads ASVLREPPAPTGFQQFSMDRGDLDEQ.

This sequence belongs to the uricase family.

It carries out the reaction urate + O2 + H2O = 5-hydroxyisourate + H2O2. It functions in the pathway purine metabolism; urate degradation; (S)-allantoin from urate: step 1/3. Catalyzes the oxidation of uric acid to 5-hydroxyisourate, which is further processed to form (S)-allantoin. The chain is Uricase from Haloferax volcanii (strain ATCC 29605 / DSM 3757 / JCM 8879 / NBRC 14742 / NCIMB 2012 / VKM B-1768 / DS2) (Halobacterium volcanii).